The primary structure comprises 236 residues: MAPASSHRGHQWICDLVRGSCLLLLLVVSNLLLCQGVEDYAPYCKNQPGNCRIPLQSLFERATLVASNNYRLAREMFNEFNKQFGEGKNFTSKVINSCHTEFMTTPNNKEAAANTEDEALLRLVISLLHSWDEPLHQAVTELLHRNGASPDILARAKEIEDKTKVLLEGVEMIQKRVHPGEKKNEPYPVWSEKSSLTADDEDVRQTAFYRMFHCLHRDSSKISTYINLLKCRFTPC.

An N-terminal signal peptide occupies residues 1–36 (MAPASSHRGHQWICDLVRGSCLLLLLVVSNLLLCQG). N89 carries an N-linked (GlcNAc...) asparagine glycan. Cystine bridges form between C98–C214 and C231–C236.

This sequence belongs to the somatotropin/prolactin family.

It localises to the secreted. This chain is Chorionic somatomammotropin hormone 1 (CSH1), found in Bos taurus (Bovine).